The primary structure comprises 568 residues: Proline--tRNA ligase (568 aa).

The protein belongs to the class-II aminoacyl-tRNA synthetase family. ProS type 1 subfamily. In terms of assembly, homodimer.

It is found in the cytoplasm. The enzyme catalyses tRNA(Pro) + L-proline + ATP = L-prolyl-tRNA(Pro) + AMP + diphosphate. In terms of biological role, catalyzes the attachment of proline to tRNA(Pro) in a two-step reaction: proline is first activated by ATP to form Pro-AMP and then transferred to the acceptor end of tRNA(Pro). As ProRS can inadvertently accommodate and process non-cognate amino acids such as alanine and cysteine, to avoid such errors it has two additional distinct editing activities against alanine. One activity is designated as 'pretransfer' editing and involves the tRNA(Pro)-independent hydrolysis of activated Ala-AMP. The other activity is designated 'posttransfer' editing and involves deacylation of mischarged Ala-tRNA(Pro). The misacylated Cys-tRNA(Pro) is not edited by ProRS. The sequence is that of Proline--tRNA ligase from Aliarcobacter butzleri (strain RM4018) (Arcobacter butzleri).